The sequence spans 313 residues: MAKRVLLASPRGYCAGVDRAVIAVEKALERHGPPVYVRKQIVHNVHVVGSLEKKGAIFVDQVDQIPPGAVTIFSAHGVSPAVVHSANERGLQVIDATCPLVTKVHREVIRFSKAGYFILLIGHSGHEEVEGTSGHAPDRVLVVNSPDEADTIDVPHTDKLVWLSQTTLSVDETLETVKRLRLRFPHIQDPPSDDICYATQNRQAAVKKIAPLSDLVIVVGSANSSNSVRLVEVALENGAKAAVRLDYADELDPALLDKVDVVGVTSGASVPEILVRDLLEVLARAGYTKVESVQTAVEDLVFSLPKGLRESRK.

Cys-14 contacts [4Fe-4S] cluster. The (2E)-4-hydroxy-3-methylbut-2-enyl diphosphate site is built by His-43 and His-76. His-43 and His-76 together coordinate dimethylallyl diphosphate. The isopentenyl diphosphate site is built by His-43 and His-76. [4Fe-4S] cluster is bound at residue Cys-98. A (2E)-4-hydroxy-3-methylbut-2-enyl diphosphate-binding site is contributed by His-126. His-126 lines the dimethylallyl diphosphate pocket. His-126 serves as a coordination point for isopentenyl diphosphate. The Proton donor role is filled by Glu-128. Thr-166 is a (2E)-4-hydroxy-3-methylbut-2-enyl diphosphate binding site. Cys-196 lines the [4Fe-4S] cluster pocket. Residues Ser-224, Ser-225, Asn-226, and Ser-269 each coordinate (2E)-4-hydroxy-3-methylbut-2-enyl diphosphate. Residues Ser-224, Ser-225, Asn-226, and Ser-269 each coordinate dimethylallyl diphosphate. Residues Ser-224, Ser-225, Asn-226, and Ser-269 each contribute to the isopentenyl diphosphate site.

It belongs to the IspH family. It depends on [4Fe-4S] cluster as a cofactor.

The catalysed reaction is isopentenyl diphosphate + 2 oxidized [2Fe-2S]-[ferredoxin] + H2O = (2E)-4-hydroxy-3-methylbut-2-enyl diphosphate + 2 reduced [2Fe-2S]-[ferredoxin] + 2 H(+). The enzyme catalyses dimethylallyl diphosphate + 2 oxidized [2Fe-2S]-[ferredoxin] + H2O = (2E)-4-hydroxy-3-methylbut-2-enyl diphosphate + 2 reduced [2Fe-2S]-[ferredoxin] + 2 H(+). The protein operates within isoprenoid biosynthesis; dimethylallyl diphosphate biosynthesis; dimethylallyl diphosphate from (2E)-4-hydroxy-3-methylbutenyl diphosphate: step 1/1. Its pathway is isoprenoid biosynthesis; isopentenyl diphosphate biosynthesis via DXP pathway; isopentenyl diphosphate from 1-deoxy-D-xylulose 5-phosphate: step 6/6. Catalyzes the conversion of 1-hydroxy-2-methyl-2-(E)-butenyl 4-diphosphate (HMBPP) into a mixture of isopentenyl diphosphate (IPP) and dimethylallyl diphosphate (DMAPP). Acts in the terminal step of the DOXP/MEP pathway for isoprenoid precursor biosynthesis. In Tropheryma whipplei (strain TW08/27) (Whipple's bacillus), this protein is 4-hydroxy-3-methylbut-2-enyl diphosphate reductase.